Here is a 173-residue protein sequence, read N- to C-terminus: Dual-action ribosomal maturation protein DarP (173 aa).

It belongs to the DarP family.

It is found in the cytoplasm. Functionally, member of a network of 50S ribosomal subunit biogenesis factors which assembles along the 30S-50S interface, preventing incorrect 23S rRNA structures from forming. Promotes peptidyl transferase center (PTC) maturation. This chain is Dual-action ribosomal maturation protein DarP, found in Pseudomonas fluorescens (strain ATCC BAA-477 / NRRL B-23932 / Pf-5).